The chain runs to 477 residues: SH3 domain-binding protein 5 homolog (477 aa).

Residues 12 to 95 adopt a coiled-coil conformation; the sequence is QIQIELENLN…AAVKFQRANE (84 aa). Residues S113 and S115 each carry the phosphoserine modification. Residues 122 to 221 adopt a coiled-coil conformation; the sequence is NAWQEMLNHA…YSTALRNLER (100 aa). Disordered stretches follow at residues 224 to 258 and 276 to 306; these read EDIHRQRGDFPTPPGPREPGVGAELNSPTSSALPS and GSQMSLGAKTPQAAAETEDEEDACDYDETGA. Positions 291–305 are enriched in acidic residues; the sequence is ETEDEEDACDYDETG.

This sequence belongs to the SH3BP5 family.

In Drosophila melanogaster (Fruit fly), this protein is SH3 domain-binding protein 5 homolog (pcs).